A 227-amino-acid polypeptide reads, in one-letter code: Cytochrome c oxidase subunit 2 (227 aa).

At 1 to 14 (MAYPLQLGFQDATS) the chain is on the mitochondrial intermembrane side. The helical transmembrane segment at 15-45 (PIMEELLHFHDHTLMIVFLISSLVLYIISLM) threads the bilayer. Residues 46–59 (LTTKLTHTSTMDAQ) lie on the Mitochondrial matrix side of the membrane. Residues 60-87 (EVETIWTILPAIILILIALPSLRILYMM) form a helical membrane-spanning segment. Residues 88–227 (DEINNPSLTI…HFEKWSTSML (140 aa)) lie on the Mitochondrial intermembrane side of the membrane. Residues H161, C196, E198, C200, H204, and M207 each contribute to the Cu cation site. Residue E198 coordinates Mg(2+).

Belongs to the cytochrome c oxidase subunit 2 family. As to quaternary structure, component of the cytochrome c oxidase (complex IV, CIV), a multisubunit enzyme composed of 14 subunits. The complex is composed of a catalytic core of 3 subunits MT-CO1, MT-CO2 and MT-CO3, encoded in the mitochondrial DNA, and 11 supernumerary subunits COX4I, COX5A, COX5B, COX6A, COX6B, COX6C, COX7A, COX7B, COX7C, COX8 and NDUFA4, which are encoded in the nuclear genome. The complex exists as a monomer or a dimer and forms supercomplexes (SCs) in the inner mitochondrial membrane with NADH-ubiquinone oxidoreductase (complex I, CI) and ubiquinol-cytochrome c oxidoreductase (cytochrome b-c1 complex, complex III, CIII), resulting in different assemblies (supercomplex SCI(1)III(2)IV(1) and megacomplex MCI(2)III(2)IV(2)). Found in a complex with TMEM177, COA6, COX18, COX20, SCO1 and SCO2. Interacts with TMEM177 in a COX20-dependent manner. Interacts with COX20. Interacts with COX16. Cu cation is required as a cofactor.

The protein localises to the mitochondrion inner membrane. It catalyses the reaction 4 Fe(II)-[cytochrome c] + O2 + 8 H(+)(in) = 4 Fe(III)-[cytochrome c] + 2 H2O + 4 H(+)(out). Component of the cytochrome c oxidase, the last enzyme in the mitochondrial electron transport chain which drives oxidative phosphorylation. The respiratory chain contains 3 multisubunit complexes succinate dehydrogenase (complex II, CII), ubiquinol-cytochrome c oxidoreductase (cytochrome b-c1 complex, complex III, CIII) and cytochrome c oxidase (complex IV, CIV), that cooperate to transfer electrons derived from NADH and succinate to molecular oxygen, creating an electrochemical gradient over the inner membrane that drives transmembrane transport and the ATP synthase. Cytochrome c oxidase is the component of the respiratory chain that catalyzes the reduction of oxygen to water. Electrons originating from reduced cytochrome c in the intermembrane space (IMS) are transferred via the dinuclear copper A center (CU(A)) of subunit 2 and heme A of subunit 1 to the active site in subunit 1, a binuclear center (BNC) formed by heme A3 and copper B (CU(B)). The BNC reduces molecular oxygen to 2 water molecules using 4 electrons from cytochrome c in the IMS and 4 protons from the mitochondrial matrix. This chain is Cytochrome c oxidase subunit 2 (MT-CO2), found in Rhinoceros unicornis (Greater Indian rhinoceros).